The sequence spans 1921 residues: Mediator of RNA polymerase II transcription subunit 13 (1921 aa).

Residues Lys-220 and Lys-226 each participate in a glycyl lysine isopeptide (Lys-Gly) (interchain with G-Cter in ubiquitin) cross-link. Disordered stretches follow at residues 400–434, 702–724, and 1485–1528; these read YEKN…TSRT, TQVE…NSST, and SPTF…GDVS. Residues 407–427 show a composition bias toward low complexity; that stretch reads SSGSSRNSSISSTSSASSGSG. Composition is skewed to polar residues over residues 1486 to 1496 and 1515 to 1527; these read PTFTSLGSESS and EGIT…QGDV.

Belongs to the Mediator complex subunit 13 family. Component of the Mediator complex. Interacts with CYCC1-2 (CDK8 homolog). As to expression, ubiquitous. Highest expression in the shoot apex.

It localises to the nucleus. Component of the Mediator complex, a coactivator involved in the regulated transcription of nearly all RNA polymerase II-dependent genes. Mediator functions as a bridge to convey information from gene-specific regulatory proteins to the basal RNA polymerase II transcription machinery. The Mediator complex, having a compact conformation in its free form, is recruited to promoters by direct interactions with regulatory proteins and serves for the assembly of a functional preinitiation complex with RNA polymerase II and the general transcription factors. Acts closely together with MAB12. Involved in the regulation of embryo patterning and cotyledon organogenesis. May act through transient repression of specific genes such as the ones responsive to auxin. The chain is Mediator of RNA polymerase II transcription subunit 13 (MED13) from Arabidopsis thaliana (Mouse-ear cress).